The chain runs to 863 residues: Dynamin-3 (863 aa).

In terms of domain architecture, Dynamin-type G spans 28–294 (LLELPQIAVV…LTNHIRDTLP (267 aa)). A G1 motif region spans residues 38 to 45 (GGQSAGKS). 38-46 (GGQSAGKSS) is a binding site for GTP. Positions 64 to 66 (VTR) are G2 motif. The interval 136–139 (DLPG) is G3 motif. Positions 205–208 (TKLD) are G4 motif. Position 205-211 (205-211 (TKLDLMD)) interacts with GTP. Position 231 is a phosphotyrosine (Tyr231). Positions 235-238 (VNRS) are G5 motif. 236–239 (NRSQ) provides a ligand contact to GTP. Lys299 is modified (N6-acetyllysine). Positions 515–621 (QVIRKGWLTV…WKASLLRAGV (107 aa)) constitute a PH domain. Tyr593 carries the post-translational modification Phosphotyrosine. N6-acetyllysine is present on Lys594. Disordered regions lie at residues 626 to 647 (SVGS…SMDP) and 742 to 863 (ATVS…SLLD). Residues 627–642 (VGSNKTENDENGQAEN) show a composition bias toward polar residues. One can recognise a GED domain in the interval 653–744 (VETIRNLVDS…IIGDINTATV (92 aa)). A phosphoserine mark is found at Ser763 and Ser767. Composition is skewed to pro residues over residues 791–816 (PAIP…PPFP) and 826–849 (PQVP…PSPT). Ser847 is modified (phosphoserine).

This sequence belongs to the TRAFAC class dynamin-like GTPase superfamily. Dynamin/Fzo/YdjA family.

Its subcellular location is the cytoplasm. It localises to the cytoskeleton. It catalyses the reaction GTP + H2O = GDP + phosphate + H(+). In terms of biological role, microtubule-associated force-producing protein involved in producing microtubule bundles and able to bind and hydrolyze GTP. Most probably involved in vesicular trafficking processes, in particular endocytosis. This is Dynamin-3 (Dnm3) from Mus musculus (Mouse).